Here is an 820-residue protein sequence, read N- to C-terminus: Trimethylamine-N-oxide reductase (820 aa).

A signal peptide (tat-type signal) is located at residues 1–33; it reads MAITRRSFLKGVATTSAASVIGPSLLASASANA. Position 179 (S179) interacts with Mo-bis(molybdopterin guanine dinucleotide).

This sequence belongs to the prokaryotic molybdopterin-containing oxidoreductase family. It depends on Mo-bis(molybdopterin guanine dinucleotide) as a cofactor. Predicted to be exported by the Tat system. The position of the signal peptide cleavage has not been experimentally proven.

The protein resides in the periplasm. It catalyses the reaction trimethylamine + 2 Fe(III)-[cytochrome c] + H2O = trimethylamine N-oxide + 2 Fe(II)-[cytochrome c] + 3 H(+). In terms of biological role, reduces trimethylamine-N-oxide (TMAO) into trimethylamine; an anaerobic reaction coupled to energy-yielding reactions. In Vibrio parahaemolyticus serotype O3:K6 (strain RIMD 2210633), this protein is Trimethylamine-N-oxide reductase (torA).